Here is a 370-residue protein sequence, read N- to C-terminus: Dihydroorotate dehydrogenase (quinone) (370 aa).

FMN-binding positions include 67 to 71 (AGFDK) and Thr-91. Lys-71 provides a ligand contact to substrate. Residue 116–120 (NRMGF) coordinates substrate. The FMN site is built by Asn-146 and Asn-179. Position 179 (Asn-179) interacts with substrate. Residue Ser-182 is the Nucleophile of the active site. Asn-184 is a substrate binding site. Positions 222 and 250 each coordinate FMN. Residue 251–252 (NT) coordinates substrate. FMN is bound by residues Gly-276, Gly-305, and 326–327 (YS).

This sequence belongs to the dihydroorotate dehydrogenase family. Type 2 subfamily. As to quaternary structure, monomer. FMN serves as cofactor.

It is found in the cell membrane. The enzyme catalyses (S)-dihydroorotate + a quinone = orotate + a quinol. It functions in the pathway pyrimidine metabolism; UMP biosynthesis via de novo pathway; orotate from (S)-dihydroorotate (quinone route): step 1/1. Functionally, catalyzes the conversion of dihydroorotate to orotate with quinone as electron acceptor. The protein is Dihydroorotate dehydrogenase (quinone) of Streptomyces griseus subsp. griseus (strain JCM 4626 / CBS 651.72 / NBRC 13350 / KCC S-0626 / ISP 5235).